We begin with the raw amino-acid sequence, 356 residues long: MVKHWRLILLLALVPLLLSGCGKPFLSTLKPAGEVADKQYDLTVLSTLIMVVVVAVVSVIFFYVIVRFRRSRVGENTIPKQVEGNKFLEITWTVIPILLLIILVIPVVLYTLELADTSPMDKKGRKAEDALVVNVRANLYWWEFEYPDYGIITSQELIVPTDQRVYFNLKASDVKHSFWIPSVGGKLDTNTDNENKFFLTFDSKRSKEAGDMFFGKCAELCGPSHALMDFKVKTMSAKEFQGWTKEMKNYKSTAESDLAKQGEELFKEKNCLSCHAVEPNDKRAEAARTAPNLATFGERTKVAGVKEANKENVKAWLKDPDSIKPGNKMTGTYPKLSDSETNALYEYLKGLKAESK.

Residues Met1–Gly20 form the signal peptide. Cys21 carries N-palmitoyl cysteine lipidation. Cys21 carries the S-diacylglycerol cysteine lipid modification. At Cys21–Thr47 the chain is on the extracellular side. The cytochrome c oxidase subunit II stretch occupies residues Cys21–Asp257. The chain crosses the membrane as a helical span at residues Leu48–Val66. The Cytoplasmic segment spans residues Arg67–Phe87. The helical transmembrane segment at Leu88–Pro106 threads the bilayer. The Extracellular portion of the chain corresponds to Val107–Lys356. The Cu cation site is built by His176, Cys217, Cys221, and His225. Residues Leu258–Lys356 form the Cytochrome c domain. Residues Cys271, Cys274, His275, and Met329 each coordinate heme c.

This sequence belongs to the cytochrome c oxidase subunit 2 family. It depends on Cu cation as a cofactor. The cofactor is heme c.

Its subcellular location is the cell membrane. The enzyme catalyses 4 Fe(II)-[cytochrome c] + O2 + 8 H(+)(in) = 4 Fe(III)-[cytochrome c] + 2 H2O + 4 H(+)(out). Functionally, subunits I and II form the functional core of the enzyme complex. Electrons originating in cytochrome c are transferred via heme a and Cu(A) to the binuclear center formed by heme a3 and Cu(B). The chain is Cytochrome c oxidase subunit 2 (ctaC) from Bacillus subtilis (strain 168).